The following is a 428-amino-acid chain: ATP phosphoribosyltransferase regulatory subunit (428 aa).

The protein belongs to the class-II aminoacyl-tRNA synthetase family. HisZ subfamily. Heteromultimer composed of HisG and HisZ subunits.

The protein resides in the cytoplasm. Its pathway is amino-acid biosynthesis; L-histidine biosynthesis; L-histidine from 5-phospho-alpha-D-ribose 1-diphosphate: step 1/9. Its function is as follows. Required for the first step of histidine biosynthesis. May allow the feedback regulation of ATP phosphoribosyltransferase activity by histidine. The polypeptide is ATP phosphoribosyltransferase regulatory subunit (Syntrophotalea carbinolica (strain DSM 2380 / NBRC 103641 / GraBd1) (Pelobacter carbinolicus)).